We begin with the raw amino-acid sequence, 400 residues long: Cytochrome b (400 aa).

4 helical membrane-spanning segments follow: residues 32-52 (FGSL…TLAM), 76-98 (WLIR…LHIG), 113-133 (TWSI…LGYV), and 179-199 (FFSL…MHLI). Residues His-82 and His-96 each coordinate heme b. Residues His-183 and His-197 each coordinate heme b. His-202 is a binding site for a ubiquinone. The next 4 membrane-spanning stretches (helical) occupy residues 226–246 (YLFK…IFVF), 290–310 (AVGV…PYLD), 322–342 (LSKV…QLGA), and 349–369 (FIVF…IIIP).

The protein belongs to the cytochrome b family. As to quaternary structure, fungal cytochrome b-c1 complex contains 10 subunits; 3 respiratory subunits, 2 core proteins and 5 low-molecular weight proteins. Cytochrome b-c1 complex is a homodimer. Heme b serves as cofactor.

The protein localises to the mitochondrion inner membrane. Functionally, component of the ubiquinol-cytochrome c reductase complex (complex III or cytochrome b-c1 complex) that is part of the mitochondrial respiratory chain. The b-c1 complex mediates electron transfer from ubiquinol to cytochrome c. Contributes to the generation of a proton gradient across the mitochondrial membrane that is then used for ATP synthesis. In Epidermophyton floccosum, this protein is Cytochrome b (cob).